The primary structure comprises 581 residues: Membrane protein insertase YidC (581 aa).

A helical membrane pass occupies residues 7-27 (ILIVALAVVSYLMVLQWNEDY). The tract at residues 41–62 (AATPALPDTPADTASTGGDDIP) is disordered. A run of 5 helical transmembrane segments spans residues 365 to 385 (TVDY…LEVI), 388 to 408 (LLGN…LIFF), 458 to 478 (LGGC…YWVL), 489 to 509 (WMFW…PIIM), and 536 to 556 (PIIF…YWVV).

The protein belongs to the OXA1/ALB3/YidC family. Type 1 subfamily. In terms of assembly, interacts with the Sec translocase complex via SecD. Specifically interacts with transmembrane segments of nascent integral membrane proteins during membrane integration.

The protein localises to the cell inner membrane. Functionally, required for the insertion and/or proper folding and/or complex formation of integral membrane proteins into the membrane. Involved in integration of membrane proteins that insert both dependently and independently of the Sec translocase complex, as well as at least some lipoproteins. Aids folding of multispanning membrane proteins. This is Membrane protein insertase YidC from Ectopseudomonas mendocina (strain ymp) (Pseudomonas mendocina).